We begin with the raw amino-acid sequence, 1310 residues long: MDTPPMQRSTPQRAGSPDTLELMDLLDAAAAAAEHRARVVTSSQPDDLLFGENGVMVGREHEIVSIPSVSGLQPEPRTEDVGEELTQDDYVCEDGQDLMGSPVIPLAEVFHTRFSEAGAREPTGADRSLETVSLGTKLARSPKPPMNDGETGRGTTPPFPQAFSPVSPASPVGDAAGNDQREDQRSIPRQTTRGNSPGLPSVVHRDRQTQSISGKKPGDEQAGHAHASGDGVVLQKTQRPAQGKSPKKKTLKVKVPLPARKPGGPVPGPVEQLYHVLSDSVPAKGAKADLPFETDDTRPRKHDARGITPRVPGRSSGGKPRAFLALPGRSHAPDPIEDDSPVEKKPKSREFVSSSSSSSSWGSSSEDEDDEPRRVSVGSETTGSRSGREHAPSPSNSDDSDSNDGGSTKQNIQPGYRSISGPDPRIRKTKRLAGEPGRQRQKSFSLPRSRTPIIPPVSGPLMMPDGSPWPGSAPLPSNRVRFGPSGETREGHWEDEAVRAARARYEASTEPVPLYVPELGDPARQYRALINLIYCPDRDPIAWLQNPKLTGVNSALNQFYQKLLPPGRAGTAVTGSVASPVPHVGEAMATGEALWALPHAAAAVAMSRRYDRAQKHFILQSLRRAFASMAYPEATGSSPAARISRGHPSPTTPATQAPDPQPSAAARSLSVCPPDDRLRTPRKRKSQPVESRSLLDKIRETPVADARVADDHVVSKAKRRVSEPVTITSGPVVDPPAVITMPLDGPAPNGGFRRIPRGALHTPVPSDQARKAYCTPETIARLVDDPLFPTAWRPALSFDPGALAEIAARRPGGGDRRFGPPSGVEALRRRCAWMRQIPDPEDVRLLIIYDPLPGEDINGPLESTLATDPGPSWSPSRGGLSVVLAALSNRLCLPSTHAWAGNWTGPPDVSALNARGVLLLSTRDLAFAGAVEYLGSRLASARRRLLVLDAVALERWPRDGPALSQYHVYVRAPARPDAQAVVRWPDSAVTEGLARAVFASSRTFGPASFARIETAFANLYPGEQPLCLCRGGNVAYTVCTRAGPKTRVPLSPREYRQYVLPGFDGCKDLARQSRGLGLGAADFVDEAAHSHRAANRWGLGAALRPVFLPEGRRPGAAGPEAGDVPTWARVFCRHALLEPDPAAEPLVLPPVAGRSVALYASADEARNALPPIPRVMWPPGFGAAETVLEGSDGTRFVFGHHGGSERPSETQAGRQRRTADDREHALELDDWEVGCEDAWDSEEGGGDDGDAPGSSFGVSIVSVAPGVLRDRRVGLRPAVKVELLSSSSSSEDEDDVWGGRGGRSPPQSRG.

Disordered regions lie at residues 117–271, 285–454, and 636–697; these read AGAR…GPVE, GAKA…TPII, and GSSP…LLDK. Residues 341–350 show a composition bias toward basic and acidic residues; that stretch reads PVEKKPKSRE. Low complexity-rich tracts occupy residues 351–364, 392–407, and 648–666; these read FVSSSSSSSSWGSS, PSPSNSDDSDSNDGGS, and PSPTTPATQAPDPQPSAAA. Positions 677 to 685 match the Nuclear localization signal motif; the sequence is RLRTPRKRK. Phosphoserine; by viral VZV ORF66 occurs at positions 686 and 722. 2 disordered regions span residues 1193 to 1258 and 1282 to 1310; these read GTRF…SFGV and ELLSSSSSSEDEDDVWGGRGGRSPPQSRG. Residues 1217–1227 are compositionally biased toward basic and acidic residues; sequence RTADDREHALE. The segment covering 1228-1250 has biased composition (acidic residues); the sequence is LDDWEVGCEDAWDSEEGGGDDGD.

The protein belongs to the herpesviridae ICP4 family. As to quaternary structure, interacts with IE4 and IE63. Interacts with host USF1 and SP1. Phosphorylated by ORF66 protein kinase on Ser-686 and Ser-722. Also phosphorylated by ORF47 protein kinase and by human CSNK2A1/CKII.

It is found in the host nucleus. The protein resides in the host cytoplasm. The protein localises to the virion tegument. Transcriptional transactivator. May interact with and recruit specific components of the general transcription machinery to viral promoters and stabilize their formation for transcription initiation. Negatively regulates its own transcription. This immediate early (EI) protein may be necessary in virion for viral pathogenesis. This chain is Major viral transcription factor ICP4 homolog, found in Homo sapiens (Human).